The sequence spans 371 residues: Ligninase LG5 (371 aa).

An N-terminal signal peptide occupies residues 1–21 (MAFKKLLAVLTAALSLRAAQG). A propeptide spanning residues 22–27 (AAVEKR) is cleaved from the precursor. Cystine bridges form between Cys-30-Cys-42, Cys-41-Cys-311, Cys-61-Cys-146, and Cys-275-Cys-344. The active-site Proton acceptor is His-74. Ca(2+)-binding residues include Asp-75, Gly-92, Asp-94, and Ser-96. Residue His-202 coordinates heme b. Ca(2+)-binding residues include Ser-203, Asp-220, Thr-222, Ile-225, and Asp-227. Residue Asn-283 is glycosylated (N-linked (GlcNAc...) asparagine). A disordered region spans residues 349-371 (FPTLSTLPGPATSVARIPPPPGA).

Belongs to the peroxidase family. Ligninase subfamily. Ca(2+) is required as a cofactor. The cofactor is heme b.

It carries out the reaction 1-(3,4-dimethoxyphenyl)-2-(2-methoxyphenoxy)propane-1,3-diol + H2O2 = 3,4-dimethoxybenzaldehyde + guaiacol + glycolaldehyde + H2O. It catalyses the reaction 2 (3,4-dimethoxyphenyl)methanol + H2O2 = 2 (3,4-dimethoxyphenyl)methanol radical + 2 H2O. The protein operates within secondary metabolite metabolism; lignin degradation. In terms of biological role, depolymerization of lignin. Catalyzes the C(alpha)-C(beta) cleavage of the propyl side chains of lignin. This chain is Ligninase LG5 (GLG5), found in Phanerodontia chrysosporium (White-rot fungus).